The sequence spans 127 residues: Large ribosomal subunit protein bL12c (127 aa).

The disordered stretch occupies residues 104 to 127 (GVAKDAAEEAKKQIEDAGGKASLK). Over residues 105–121 (VAKDAAEEAKKQIEDAG) the composition is skewed to basic and acidic residues.

It belongs to the bacterial ribosomal protein bL12 family. Homodimer. Part of the ribosomal stalk of the 50S ribosomal subunit. Forms a multimeric L10(L12)X complex, where L10 forms an elongated spine to which 2 to 4 L12 dimers bind in a sequential fashion. Binds GTP-bound translation factors.

It localises to the plastid. The protein resides in the chloroplast. Its function is as follows. Forms part of the ribosomal stalk which helps the ribosome interact with GTP-bound translation factors. Is thus essential for accurate translation. This Trieres chinensis (Marine centric diatom) protein is Large ribosomal subunit protein bL12c.